A 237-amino-acid chain; its full sequence is Proteasome subunit beta type-1-B (237 aa).

This sequence belongs to the peptidase T1B family. In terms of assembly, the 26S proteasome consists of a 20S proteasome core and two 19S regulatory subunits. The 20S proteasome core is composed of 28 subunits that are arranged in four stacked rings, resulting in a barrel-shaped structure. The two end rings are each formed by seven alpha subunits, and the two central rings are each formed by seven beta subunits. The catalytic chamber with the active sites is on the inside of the barrel.

It localises to the cytoplasm. It is found in the nucleus. In terms of biological role, non-catalytic component of the proteasome, a multicatalytic proteinase complex which is characterized by its ability to cleave peptides with Arg, Phe, Tyr, Leu, and Glu adjacent to the leaving group at neutral or slightly basic pH. The proteasome has an ATP-dependent proteolytic activity. This is Proteasome subunit beta type-1-B (psmb1-B) from Carassius auratus (Goldfish).